Reading from the N-terminus, the 348-residue chain is Dihydroorotate dehydrogenase (quinone) (348 aa).

FMN is bound by residues 65 to 69 (AGMDK) and Thr89. Residue Lys69 coordinates substrate. Residue 114 to 118 (NRMGF) coordinates substrate. FMN-binding residues include Asn143 and Asn176. Asn176 is a binding site for substrate. Ser179 serves as the catalytic Nucleophile. Position 181 (Asn181) interacts with substrate. Lys221 and Thr249 together coordinate FMN. Substrate is bound at residue 250-251 (NT). FMN contacts are provided by residues Gly272, Gly301, and 322-323 (YT).

This sequence belongs to the dihydroorotate dehydrogenase family. Type 2 subfamily. In terms of assembly, monomer. The cofactor is FMN.

The protein localises to the cell membrane. The enzyme catalyses (S)-dihydroorotate + a quinone = orotate + a quinol. The protein operates within pyrimidine metabolism; UMP biosynthesis via de novo pathway; orotate from (S)-dihydroorotate (quinone route): step 1/1. Functionally, catalyzes the conversion of dihydroorotate to orotate with quinone as electron acceptor. This is Dihydroorotate dehydrogenase (quinone) from Akkermansia muciniphila (strain ATCC BAA-835 / DSM 22959 / JCM 33894 / BCRC 81048 / CCUG 64013 / CIP 107961 / Muc).